The sequence spans 519 residues: ATP synthase subunit alpha (519 aa).

175–182 lines the ATP pocket; the sequence is GDRQTGKT.

Belongs to the ATPase alpha/beta chains family. As to quaternary structure, F-type ATPases have 2 components, CF(1) - the catalytic core - and CF(0) - the membrane proton channel. CF(1) has five subunits: alpha(3), beta(3), gamma(1), delta(1), epsilon(1). CF(0) has three main subunits: a(1), b(2) and c(9-12). The alpha and beta chains form an alternating ring which encloses part of the gamma chain. CF(1) is attached to CF(0) by a central stalk formed by the gamma and epsilon chains, while a peripheral stalk is formed by the delta and b chains.

Its subcellular location is the cell inner membrane. It carries out the reaction ATP + H2O + 4 H(+)(in) = ADP + phosphate + 5 H(+)(out). Produces ATP from ADP in the presence of a proton gradient across the membrane. The alpha chain is a regulatory subunit. The sequence is that of ATP synthase subunit alpha from Acinetobacter baylyi (strain ATCC 33305 / BD413 / ADP1).